The chain runs to 83 residues: Cytochrome b559 subunit alpha (83 aa).

A helical transmembrane segment spans residues 21 to 35; that stretch reads VIHSITIPSLFIAGW. His23 serves as a coordination point for heme.

This sequence belongs to the PsbE/PsbF family. As to quaternary structure, heterodimer of an alpha subunit and a beta subunit. PSII is composed of 1 copy each of membrane proteins PsbA, PsbB, PsbC, PsbD, PsbE, PsbF, PsbH, PsbI, PsbJ, PsbK, PsbL, PsbM, PsbT, PsbX, PsbY, PsbZ, Psb30/Ycf12, at least 3 peripheral proteins of the oxygen-evolving complex and a large number of cofactors. It forms dimeric complexes. It depends on heme b as a cofactor.

It localises to the plastid. The protein localises to the chloroplast thylakoid membrane. This b-type cytochrome is tightly associated with the reaction center of photosystem II (PSII). PSII is a light-driven water:plastoquinone oxidoreductase that uses light energy to abstract electrons from H(2)O, generating O(2) and a proton gradient subsequently used for ATP formation. It consists of a core antenna complex that captures photons, and an electron transfer chain that converts photonic excitation into a charge separation. This is Cytochrome b559 subunit alpha from Pinus koraiensis (Korean pine).